A 141-amino-acid polypeptide reads, in one-letter code: Acetyltransferase YpeA (141 aa).

An N-acetyltransferase domain is found at 1–141; the sequence is MEIRVFRQED…GKRLIEDEEY (141 aa).

Belongs to the acetyltransferase family. YpeA subfamily.

The polypeptide is Acetyltransferase YpeA (Shigella boydii serotype 4 (strain Sb227)).